The following is an 818-amino-acid chain: Rho GTPase-activating protein 44 (818 aa).

A BAR domain is found at glutamine 14–glutamate 249. Positions lysine 255–phenylalanine 445 constitute a Rho-GAP domain. 3 disordered regions span residues alanine 467–serine 493, serine 530–threonine 772, and threonine 789–leucine 818. Basic and acidic residues predominate over residues proline 479 to arginine 489. At serine 493 the chain carries Phosphoserine. Residues glutamine 563–glycine 579 are compositionally biased toward low complexity. Over residues glycine 598–threonine 611 the composition is skewed to polar residues. Low complexity-rich tracts occupy residues alanine 614 to proline 641 and serine 688 to alanine 708. Residues lysine 731 to leucine 818 are interaction with BST2. Positions valine 746–glutamate 757 are enriched in polar residues. A PDZ-binding motif is present at residues methionine 764 to glycine 767. Over residues proline 794 to serine 809 the composition is skewed to basic and acidic residues. A Phosphoserine modification is found at serine 809. Positions serine 815 to leucine 818 match the PDZ-binding motif.

In terms of assembly, interacts with BST2 (via cytoplasmic domain). Interacts (probably via PDZ-binding motif) with SHANK3 (via PDZ domain); the interaction takes place in dendritic spines and promotes GRIA1 exocytosis. In terms of tissue distribution, highly expressed in brain. Expressed at weak level in other tissues.

It localises to the cell projection. The protein resides in the dendritic spine. Its subcellular location is the recycling endosome. It is found in the presynapse. The protein localises to the dendrite. In terms of biological role, GTPase-activating protein (GAP) that stimulates the GTPase activity of Rho-type GTPases. Thereby, controls Rho-type GTPases cycling between their active GTP-bound and inactive GDP-bound states. Acts as a GAP at least for CDC42 and RAC1. In neurons, is involved in dendritic spine formation and synaptic plasticity in a specific RAC1-GAP activity. Limits the initiation of exploratory dendritic filopodia. Recruited to actin-patches that seed filopodia, binds specifically to plasma membrane sections that are deformed inward by acto-myosin mediated contractile forces. Acts through GAP activity on RAC1 to reduce actin polymerization necessary for filopodia formation. In association with SHANK3, promotes GRIA1 exocytosis from recycling endosomes and spine morphological changes associated to long-term potentiation. This Homo sapiens (Human) protein is Rho GTPase-activating protein 44.